The sequence spans 156 residues: 3-hydroxyacyl-[acyl-carrier-protein] dehydratase FabZ (156 aa).

The active site involves H57.

This sequence belongs to the thioester dehydratase family. FabZ subfamily.

Its subcellular location is the cytoplasm. The enzyme catalyses a (3R)-hydroxyacyl-[ACP] = a (2E)-enoyl-[ACP] + H2O. Functionally, involved in unsaturated fatty acids biosynthesis. Catalyzes the dehydration of short chain beta-hydroxyacyl-ACPs and long chain saturated and unsaturated beta-hydroxyacyl-ACPs. This chain is 3-hydroxyacyl-[acyl-carrier-protein] dehydratase FabZ, found in Anaeromyxobacter sp. (strain K).